Consider the following 119-residue polypeptide: Ribonuclease P protein component (119 aa).

The protein belongs to the RnpA family. As to quaternary structure, consists of a catalytic RNA component (M1 or rnpB) and a protein subunit.

It catalyses the reaction Endonucleolytic cleavage of RNA, removing 5'-extranucleotides from tRNA precursor.. In terms of biological role, RNaseP catalyzes the removal of the 5'-leader sequence from pre-tRNA to produce the mature 5'-terminus. It can also cleave other RNA substrates such as 4.5S RNA. The protein component plays an auxiliary but essential role in vivo by binding to the 5'-leader sequence and broadening the substrate specificity of the ribozyme. The chain is Ribonuclease P protein component from Listeria innocua serovar 6a (strain ATCC BAA-680 / CLIP 11262).